A 253-amino-acid polypeptide reads, in one-letter code: MTEPTFAAADTDLLTEPRLVVEPGVAARVAAVAEPVLQGMGYRLVRIRISGEAGCTVQVMAERPDGTMQIEDCEAVSRALSPVLDIADPIDRAYRLEISSPGIDRPLVRRTDFERHIGHLVKIEMAVAHQNRKRFRGIITGLDGDGVCITRDDVAKDQDPSVVLPMTDIGDAKLVLTDELIAESMRRGKAAEREKKRDLGLAPPLAPHAKPAAQAKPKPKLKDGQAAKKPLPTNTKKHRLAADRARRGEIDPD.

Over residues 186 to 199 (RRGKAAEREKKRDL) the composition is skewed to basic and acidic residues. Residues 186–253 (RRGKAAEREK…RARRGEIDPD (68 aa)) form a disordered region. Residues 201–216 (LAPPLAPHAKPAAQAK) are compositionally biased toward low complexity. A compositionally biased stretch (basic and acidic residues) spans 240-253 (LAADRARRGEIDPD).

This sequence belongs to the RimP family.

The protein localises to the cytoplasm. Functionally, required for maturation of 30S ribosomal subunits. This chain is Ribosome maturation factor RimP, found in Bradyrhizobium sp. (strain BTAi1 / ATCC BAA-1182).